A 625-amino-acid chain; its full sequence is Serine/threonine-protein kinase PknB (625 aa).

The Cytoplasmic segment spans residues 1-331; it reads MTTPQHLSDR…KQRSTSVARW (331 aa). A Protein kinase domain is found at 11 to 274; sequence YELGEILGFG…TAAEMRADLI (264 aa). Residues 17–25, Lys-40, and 93–95 each bind ATP; these read LGFGGMSEV and EYV. Residue Asp-138 is the Proton acceptor of the active site. ATP contacts are provided by residues 140–143 and Asp-156; that span reads KPAN. Residues Asn-143 and Asp-156 each coordinate Mg(2+). Ser-169 carries the post-translational modification Phosphoserine; by autocatalysis. Residues Thr-171, Thr-173, and Thr-294 each carry the phosphothreonine; by autocatalysis modification. A Phosphoserine; by autocatalysis modification is found at Ser-295. The disordered stretch occupies residues 302 to 321; that stretch reads ADRAGAATQDMPVPRPAGYS. At Thr-309 the chain carries Phosphothreonine; by autocatalysis. Residues 332 to 352 traverse the membrane as a helical segment; sequence LIAVAVLAVLTVVVTVAINMV. Residues 353–625 are Extracellular-facing; that stretch reads GGNPRNVQVP…DAKITLSFAA (273 aa). PASTA domains follow at residues 355-421, 422-489, 490-556, and 557-625; these read NPRN…NVST, GPEQ…VVGA, GPED…RVSK, and GNQF…SFAA. Positions 591–612 are disordered; it reads DVRDSGQRTNAVVTQSPSAGTP. Residues 597 to 611 show a composition bias toward polar residues; it reads QRTNAVVTQSPSAGT.

The protein belongs to the protein kinase superfamily. Ser/Thr protein kinase family. As to quaternary structure, homodimer. In terms of processing, autophosphorylated. Dephosphorylated by PstP.

Its subcellular location is the cell membrane. The enzyme catalyses L-seryl-[protein] + ATP = O-phospho-L-seryl-[protein] + ADP + H(+). The catalysed reaction is L-threonyl-[protein] + ATP = O-phospho-L-threonyl-[protein] + ADP + H(+). By K-252a. Functionally, protein kinase that regulates many aspects of mycobacterial physiology. Is a key component of a signal transduction pathway that regulates cell growth, cell shape and cell division via phosphorylation of target proteins. Probably phosphorylates RseA. This Mycolicibacterium smegmatis (strain ATCC 700084 / mc(2)155) (Mycobacterium smegmatis) protein is Serine/threonine-protein kinase PknB (pknB).